The chain runs to 133 residues: Protein Ac75 (133 aa).

Interacts with protein Ac76.

The protein resides in the virion. It localises to the host cytoplasm. Its subcellular location is the host nucleus. Plays a role in nuclear egress of nucleocapsids and intranuclear microvesicle formation. The sequence is that of Protein Ac75 (Ac75) from Lepidoptera (butterflies and moths).